The sequence spans 85 residues: Beta-insect depressant toxin BmKITb (85 aa).

An N-terminal signal peptide occupies residues 1–21 (MKLFLLLVISASMLIDGLVNA). The region spanning 22 to 82 (DGYIRGSNGC…TWKSESNTCG (61 aa)) is the LCN-type CS-alpha/beta domain. 4 disulfides stabilise this stretch: Cys31/Cys81, Cys35/Cys56, Cys42/Cys63, and Cys46/Cys65. Gly82 is modified (glycine amide).

In terms of tissue distribution, expressed by the venom gland.

The protein localises to the secreted. Functionally, depressant insect beta-toxins cause a transient contraction paralysis followed by a slow flaccid paralysis. They bind voltage-independently at site-4 of sodium channels (Nav) and shift the voltage of activation toward more negative potentials thereby affecting sodium channel activation and promoting spontaneous and repetitive firing. However, this toxin has some characteristics of excitatory toxins such as bursts of activity after the membrane has been hyperpolarized. This toxin is active only on insects. The chain is Beta-insect depressant toxin BmKITb from Olivierus martensii (Manchurian scorpion).